The following is a 469-amino-acid chain: MKMIQVLGTSSDSGKSTLATAFCRILKDLGYRVSPFKAVNMSLNSIAIKDGSEIARAQWVQAMAAGAEPSAYMNPVLLKPEGHHKSQVIILGRSIGSMGINDYYNYINKNAKIIKESIDFLSNKYDVIISEGAGSPAEINLAGRDFANIYVSSLYNTPAILVADIDRGGVFASIYGTINLMQRSDLLKYYIINKMRGDQSLLYPGIERIEELTGKKCLGIVPYIDLKLPGEDSLDYNFSGSGSIGIVRYPYMENYSDFDPLIFNEKAFYIKNKEDLKRCDVIILPGSKDVFHDLEYINSNGIADSIKRCSGEKMIIGICGGYQMLGKRINDASGVESDGVSIPGLGLLDIETYYNKTKTTGSVKYRFAENQLKINGSGTGYEIHYGSIVKNNEMPLLITDHGPEGSVSSNGMVIGTNVHGILENNEFYRYITGEYLDYDNIIENSIETLAGIVKKSINIEGFLELLNDA.

The GATase cobBQ-type domain maps to 241-427; the sequence is SGSIGIVRYP…VHGILENNEF (187 aa). C319 acts as the Nucleophile in catalysis. The active site involves H419.

This sequence belongs to the CobB/CobQ family. CobQ subfamily.

It participates in cofactor biosynthesis; adenosylcobalamin biosynthesis. Functionally, catalyzes amidations at positions B, D, E, and G on adenosylcobyrinic A,C-diamide. NH(2) groups are provided by glutamine, and one molecule of ATP is hydrogenolyzed for each amidation. The sequence is that of Probable cobyric acid synthase from Picrophilus torridus (strain ATCC 700027 / DSM 9790 / JCM 10055 / NBRC 100828 / KAW 2/3).